A 140-amino-acid polypeptide reads, in one-letter code: MLMPKRTKYRRPHRLSYEGKVKGKNLIVNGNYGLIAQEGNWITNKQIEAARIAMTRHMKRTGKVWINIFPHLSLTRKPLEVRMGSGKGAPEEWVAVVKKGKVLFEVSDLNNSVKAELEALRLASHKLPIKTKIVKKGEQK.

It belongs to the universal ribosomal protein uL16 family. Part of the 50S ribosomal subunit.

Functionally, binds 23S rRNA and is also seen to make contacts with the A and possibly P site tRNAs. The sequence is that of Large ribosomal subunit protein uL16 from Phytoplasma mali (strain AT).